The sequence spans 338 residues: MESENILEAKQVSVAFRIAGKFQKAIYDIDLSLRRGEVLAIVGESGSGKSTLATAVMGLHNPNQTQITGSILLDEEEVIGKTGDSMASIRGSKVGMIFQNPLTALNPLMKIGQQIKEMLAVHDVYPENQYESRIFQLLEQVGIPNPKRVVNQFPHQLSGGMRQRVMIAIAIANDPDLIIADEPTTALDVTIQAQILDLILEIQKKKNAGVILITHDLGVVAEVADTVAVMYAGQLVEKASVEELFQNPKHPYTRSLLRSNPSAETVSDDLYVIPGSVPSLSEIEYDKDLFLARVPWMKEEAQKVISEKMTEISSNHFVRGQAWKKFEFPDQKLKGGKK.

The 251-residue stretch at 7-257 (LEAKQVSVAF…PKHPYTRSLL (251 aa)) folds into the ABC transporter domain. 43–50 (GESGSGKS) is a binding site for ATP.

Belongs to the ABC transporter superfamily. In terms of assembly, the complex is composed of two ATP-binding proteins (OppD and OppF), two transmembrane proteins (OppB and OppC) and a solute-binding protein (OppA).

It is found in the cell membrane. The enzyme catalyses a [peptide](out) + ATP + H2O = a [peptide](in) + ADP + phosphate + H(+). Functionally, part of the ABC transporter complex OppABCDF involved in the uptake of oligopeptides. Probably responsible for energy coupling to the transport system. Essential for uptake of peptides larger than three amino acids and for growth in milk. In Lactococcus lactis subsp. cremoris (strain SK11), this protein is Oligopeptide transport ATP-binding protein OppD.